The sequence spans 469 residues: uncharacterized protein (469 aa).

Positions 203–244 (ACPVPPQGHASSAADQAGVPERGRKRAHEGPGAGEAASAGRG) are disordered.

This sequence belongs to the epstein-barr virus LF1 family.

This is an uncharacterized protein from Homo sapiens (Human).